The primary structure comprises 234 residues: Zein-alpha A30 (234 aa).

The N-terminal stretch at 1–21 is a signal peptide; the sequence is MAAKIFCLLMLLGLSASAATA.

This sequence belongs to the zein family.

Its function is as follows. Zeins are major seed storage proteins. In Zea mays (Maize), this protein is Zein-alpha A30.